Here is a 173-residue protein sequence, read N- to C-terminus: CKLF-like MARVEL transmembrane domain-containing protein 8 (173 aa).

Residues 36–168 (FLRTLPGFLI…NTYFSFIAWR (133 aa)) enclose the MARVEL domain. Transmembrane regions (helical) follow at residues 40-60 (LPGF…TLIA), 70-90 (FGWV…FLII), 105-125 (TTVG…AAVV), and 147-167 (FFAF…FIAW).

This sequence belongs to the chemokine-like factor family. As to expression, highly expressed in liver and pancreas.

The protein localises to the membrane. Its subcellular location is the cytoplasm. The protein resides in the nucleus. This is CKLF-like MARVEL transmembrane domain-containing protein 8 (CMTM8) from Homo sapiens (Human).